The following is a 203-amino-acid chain: Protein GrpE (203 aa).

Residues 1 to 38 (MTQDQTAEQMPAAESADQSADQGPAAESAAPPAVDSER) form a disordered region.

The protein belongs to the GrpE family. As to quaternary structure, homodimer.

It localises to the cytoplasm. Participates actively in the response to hyperosmotic and heat shock by preventing the aggregation of stress-denatured proteins, in association with DnaK and GrpE. It is the nucleotide exchange factor for DnaK and may function as a thermosensor. Unfolded proteins bind initially to DnaJ; upon interaction with the DnaJ-bound protein, DnaK hydrolyzes its bound ATP, resulting in the formation of a stable complex. GrpE releases ADP from DnaK; ATP binding to DnaK triggers the release of the substrate protein, thus completing the reaction cycle. Several rounds of ATP-dependent interactions between DnaJ, DnaK and GrpE are required for fully efficient folding. The sequence is that of Protein GrpE from Paramagnetospirillum magneticum (strain ATCC 700264 / AMB-1) (Magnetospirillum magneticum).